The sequence spans 274 residues: Ribosomal RNA small subunit methyltransferase A (274 aa).

Positions 26, 28, 53, 74, 94, and 114 each coordinate S-adenosyl-L-methionine.

Belongs to the class I-like SAM-binding methyltransferase superfamily. rRNA adenine N(6)-methyltransferase family. RsmA subfamily.

The protein localises to the cytoplasm. It catalyses the reaction adenosine(1518)/adenosine(1519) in 16S rRNA + 4 S-adenosyl-L-methionine = N(6)-dimethyladenosine(1518)/N(6)-dimethyladenosine(1519) in 16S rRNA + 4 S-adenosyl-L-homocysteine + 4 H(+). In terms of biological role, specifically dimethylates two adjacent adenosines (A1518 and A1519) in the loop of a conserved hairpin near the 3'-end of 16S rRNA in the 30S particle. May play a critical role in biogenesis of 30S subunits. The sequence is that of Ribosomal RNA small subunit methyltransferase A from Bdellovibrio bacteriovorus (strain ATCC 15356 / DSM 50701 / NCIMB 9529 / HD100).